The following is a 419-amino-acid chain: Endochitinase 2 (419 aa).

Residues 1–18 (MHHLRALVGVGLAGLAAG) form the signal peptide. The 309-residue stretch at 35 to 343 (AQNVVYWGQN…QQAKSILVNG (309 aa)) folds into the GH18 domain. N153 carries an N-linked (GlcNAc...) asparagine glycan. E173 functions as the Proton donor in the catalytic mechanism. 2 N-linked (GlcNAc...) asparagine glycosylation sites follow: N237 and N256. The interval 343–390 (GAPCPSSGPPSSTPATAPAPTATTMPSSTSVSSPTASPTGGTVPQWGQ) is disordered. Low complexity predominate over residues 355–384 (TPATAPAPTATTMPSSTSVSSPTASPTGGT). A CBM1 domain is found at 383–419 (GTVPQWGQCGGEGYSGPTQCVPPYQCVKQGDWWSSCR).

It belongs to the glycosyl hydrolase 18 family. Chitinase class III subfamily.

It is found in the secreted. The catalysed reaction is Random endo-hydrolysis of N-acetyl-beta-D-glucosaminide (1-&gt;4)-beta-linkages in chitin and chitodextrins.. In terms of biological role, secreted chitinase involved in the degradation of chitin, a component of the cell walls of fungi and exoskeletal elements of some animals (including worms and arthropods). Participates in the infection process and directly acts in the penetration process of the host cuticle. This Metarhizium anisopliae (Entomophthora anisopliae) protein is Endochitinase 2 (chi2).